The primary structure comprises 423 residues: Glutamate-1-semialdehyde 2,1-aminomutase (423 aa).

Residue K258 is modified to N6-(pyridoxal phosphate)lysine.

The protein belongs to the class-III pyridoxal-phosphate-dependent aminotransferase family. HemL subfamily. Pyridoxal 5'-phosphate serves as cofactor.

It localises to the cytoplasm. It catalyses the reaction (S)-4-amino-5-oxopentanoate = 5-aminolevulinate. It functions in the pathway porphyrin-containing compound metabolism; protoporphyrin-IX biosynthesis; 5-aminolevulinate from L-glutamyl-tRNA(Glu): step 2/2. In Pyrobaculum aerophilum (strain ATCC 51768 / DSM 7523 / JCM 9630 / CIP 104966 / NBRC 100827 / IM2), this protein is Glutamate-1-semialdehyde 2,1-aminomutase.